We begin with the raw amino-acid sequence, 375 residues long: Trans-enoyl reductase cghC (375 aa).

48 to 51 (VDTK) contacts NADP(+). Residue 135-142 (NAWYTSGW) participates in substrate binding. NADP(+) contacts are provided by residues 188-191 (SSST), 211-214 (SARN), and 276-277 (LD). 297-301 (GPELV) lines the substrate pocket. Position 366 to 367 (366 to 367 (VS)) interacts with NADP(+).

This sequence belongs to the zinc-containing alcohol dehydrogenase family. In terms of assembly, monomer.

The catalysed reaction is (2S,4S)-4-hydroxy-4-methylglutamate + 8 malonyl-CoA + 3 S-adenosyl-L-methionine + ATP + 8 NADPH + 11 H(+) = (2S)-3-[(2S)-3,5-dioxo-4-[(2E,4R,6R,8E,10E,12E)-4,6,12-trimethyltetradeca-2,8,10,12-tetraenoyl]pyrrolidin-2-yl]-2-hydroxy-2-methylpropanoate + AMP + 3 S-adenosyl-L-homocysteine + 8 CO2 + diphosphate + 8 NADP(+) + 8 CoA + 6 H2O. It functions in the pathway secondary metabolite biosynthesis. In terms of biological role, trans-enoyl reductase; part of the gene cluster that mediates the biosynthesis of the tetramic acid Sch210972, a potential anti-HIV fungal natural product that contains a decalin core. The PKS module of cghG together with the enoylreductase cghC catalyze the formation of the polyketide unit which is then conjugated to 4-hydroxyl-4-methyl glutamate (HMG) by the condensation domain of the cghG NRPS module. One unique structural feature of Sch210972 is the tetramic acid motif proposed to be derived from the non-proteinogenic amino acid HMG, by a Dieckmann-type condensation catalyzed by the reductase domain of cghG. The aldolase cghB catalyzes the aldol condensation of 2 molecules of pyruvic acid to yield the intermediate 4-hydroxyl-4-methyl-2-oxoglutarate (HMOG), which can then be stereoselectively transaminated by an unidentified enzyme to form HMG. The Diels-Alderase cghA then uses the Dieckmann product released by cghG as substrate and catalyzes the Diels-Alder cycloaddition to form the decalin ring of Sch210972. CghA also suppresses the nonenzymatic formation of the alternative stereoisomer. This chain is Trans-enoyl reductase cghC, found in Chaetomium globosum (strain ATCC 6205 / CBS 148.51 / DSM 1962 / NBRC 6347 / NRRL 1970) (Soil fungus).